A 333-amino-acid polypeptide reads, in one-letter code: Homeobox protein engrailed-2 (333 aa).

3 disordered regions span residues 1–49, 95–206, and 223–250; these read MEEN…RALM, GRGG…GANL, and SDRP…PRTA. 2 stretches are compositionally biased toward gly residues: residues 25–36 and 95–117; these read PGGGSGGGGGSS and GRGG…GAGG. 2 stretches are compositionally biased toward low complexity: residues 142-151 and 191-200; these read PLPAAGSDSP and LSVSSDSDSS. The segment at residues 244–303 is a DNA-binding region (homeobox); it reads DKRPRTAFTAEQLQRLKAEFQTNRYLTEQRRQSLAQELSLNESQIKIWFQNKRAKIKKAT.

It belongs to the engrailed homeobox family.

It localises to the nucleus. The chain is Homeobox protein engrailed-2 (EN2) from Homo sapiens (Human).